The primary structure comprises 146 residues: Copper transporter 5 (146 aa).

Residues 24 to 44 traverse the membrane as a helical segment; sequence WLSYILTLIACFVFSAFYQYL. The tract at residues 55 to 74 is disordered; it reads SSSRRAPPPPRSSSGVSAPL. Residues 101–121 form a helical membrane-spanning segment; the sequence is LLMLAAMSFNGGVFIAIVVGL.

Belongs to the copper transporter (Ctr) (TC 1.A.56) family. SLC31A subfamily. As to expression, highly expressed in leaves and stems and at lower levels in roots and flowers.

The protein localises to the membrane. Functionally, involved in the transport of copper. The chain is Copper transporter 5 (COPT5) from Arabidopsis thaliana (Mouse-ear cress).